The chain runs to 147 residues: Pathogenesis-related protein PR-4A (147 aa).

The N-terminal stretch at 1–25 (MERVNNYKLCVALLIISMVMAMAAA) is a signal peptide. In terms of domain architecture, Barwin spans 26–147 (QSATNVRSTY…VNYEFVNCND (122 aa)). 3 disulfides stabilise this stretch: C54/C86, C75/C109, and C89/C145.

It is found in the secreted. The protein localises to the cell wall. In Nicotiana tabacum (Common tobacco), this protein is Pathogenesis-related protein PR-4A.